Reading from the N-terminus, the 111-residue chain is Aspartate 1-decarboxylase (111 aa).

The active-site Schiff-base intermediate with substrate; via pyruvic acid is the Ser25. At Ser25 the chain carries Pyruvic acid (Ser). A substrate-binding site is contributed by Thr57. Tyr58 serves as the catalytic Proton donor. 73-75 (GPA) provides a ligand contact to substrate.

Belongs to the PanD family. In terms of assembly, heterooctamer of four alpha and four beta subunits. Pyruvate is required as a cofactor. In terms of processing, is synthesized initially as an inactive proenzyme, which is activated by self-cleavage at a specific serine bond to produce a beta-subunit with a hydroxyl group at its C-terminus and an alpha-subunit with a pyruvoyl group at its N-terminus.

The protein localises to the cytoplasm. The catalysed reaction is L-aspartate + H(+) = beta-alanine + CO2. Its pathway is cofactor biosynthesis; (R)-pantothenate biosynthesis; beta-alanine from L-aspartate: step 1/1. Catalyzes the pyruvoyl-dependent decarboxylation of aspartate to produce beta-alanine. This Coxiella burnetii (strain RSA 493 / Nine Mile phase I) protein is Aspartate 1-decarboxylase.